The following is a 218-amino-acid chain: Ribose-5-phosphate isomerase A (218 aa).

Substrate contacts are provided by residues Ser-28–Thr-31, Asp-81–Asp-84, and Lys-94–Gly-97. Catalysis depends on Glu-103, which acts as the Proton acceptor. Lys-121 lines the substrate pocket.

Belongs to the ribose 5-phosphate isomerase family. In terms of assembly, homodimer.

The catalysed reaction is aldehydo-D-ribose 5-phosphate = D-ribulose 5-phosphate. The protein operates within carbohydrate degradation; pentose phosphate pathway; D-ribose 5-phosphate from D-ribulose 5-phosphate (non-oxidative stage): step 1/1. Catalyzes the reversible conversion of ribose-5-phosphate to ribulose 5-phosphate. This chain is Ribose-5-phosphate isomerase A, found in Dichelobacter nodosus (strain VCS1703A).